The primary structure comprises 82 residues: Cytochrome c-551 (82 aa).

Heme c contacts are provided by cysteine 12, cysteine 15, histidine 16, and methionine 61.

Binds 1 heme c group covalently per subunit.

Functionally, this is a prokaryotic monoheme cytochrome, unreactive with mitochondrial cytochrome C oxidase or reductase. It functions in nitrite and nitrate respiration in Pseudomonas, but it is also found in other bacteria. This Ectopseudomonas mendocina (Pseudomonas mendocina) protein is Cytochrome c-551.